We begin with the raw amino-acid sequence, 1131 residues long: DNA-directed RNA polymerase subunit beta (1131 aa).

Positions 1108–1131 are disordered; the sequence is QLARRTPPRPTYESLSRESLDDDE. Residues 1122-1131 show a composition bias toward basic and acidic residues; that stretch reads LSRESLDDDE.

The protein belongs to the RNA polymerase beta chain family. In terms of assembly, in cyanobacteria the RNAP catalytic core is composed of 2 alpha, 1 beta, 1 beta', 1 gamma and 1 omega subunit. When a sigma factor is associated with the core the holoenzyme is formed, which can initiate transcription.

It carries out the reaction RNA(n) + a ribonucleoside 5'-triphosphate = RNA(n+1) + diphosphate. DNA-dependent RNA polymerase catalyzes the transcription of DNA into RNA using the four ribonucleoside triphosphates as substrates. This is DNA-directed RNA polymerase subunit beta from Nostoc sp. (strain PCC 7120 / SAG 25.82 / UTEX 2576).